The primary structure comprises 353 residues: MACAGLLTVCLLGPPAPQQPRHSAPAAGHALFQDVFRRADKNDDGKLSFEEFQNYFADGVLSSAELRELFSGIDDHLTDNLETEKLCDYFSTHLGVYRPVLAALESLNRAVLTAMDTTKLEYEQASKVDQFVTRFLLRETVNQLQALQTSLEGASDTLEAQAHGQRLDEETIKAQSRPCGSRRAGRRALRSISWSPSWSPGSSDTGRSSEAEQQWRLQVNRLQELIDQLECKAPRLEPTHEEDLTKGFDSHILVAQRQVQVAEDALQDFHRALCCYMNFTGAQSHCLHVSAQKMLDNAAFTLYEFWQDEASWRRHQQSPCSKAFQRTLIDHLQAPDTLTTVFFPASWWIMNNN.

Residues 27–62 enclose the EF-hand domain; the sequence is AGHALFQDVFRRADKNDDGKLSFEEFQNYFADGVLS. Ca(2+) is bound by residues Asp40, Asn42, Asp44, Lys46, and Glu51. Positions 172–181 are required for interaction with APBA3; sequence IKAQSRPCGS. Positions 193–203 are enriched in low complexity; the sequence is SWSPSWSPGSS. The disordered stretch occupies residues 193 to 213; sequence SWSPSWSPGSSDTGRSSEAEQ. A compositionally biased stretch (polar residues) spans 204-213; sequence DTGRSSEAEQ. Positions 253–342 constitute an ABM domain; the sequence is LVAQRQVQVA…QAPDTLTTVF (90 aa).

As to quaternary structure, interacts with the N-terminal domain of APBA2. Interacts with NEK2. Interacts with APBA3; APBA3 seems to mediate the interaction between NECAB3 and HIF1AN. Post-translationally, phosphorylated by NEK2. As to expression, widely expressed, with highest levels in the brain.

Its subcellular location is the golgi apparatus. Inhibits the interaction of APBA2 with amyloid-beta precursor protein (APP), and hence allows formation of amyloid-beta. May enhance the activity of HIF1A and thus promote glycolysis under normoxic conditions; the function requires its ABM domain and may implicate the stabilization of the interaction between HIF1AN and APBA3. The polypeptide is N-terminal EF-hand calcium-binding protein 3 (Necab3) (Mus musculus (Mouse)).